A 633-amino-acid polypeptide reads, in one-letter code: Ankyrin repeat and SOCS box protein 2 (633 aa).

In terms of domain architecture, UIM spans 26–45 (SEDELVQMAIEQSLADKTRG). ANK repeat units lie at residues 102 to 131 (APVD…NLSE), 135 to 165 (EGWL…VIDQ), 169 to 198 (QEET…EPDI), 202 to 231 (SRET…DTNH), 235 to 264 (RGWT…KVEA), 268 to 297 (YGIT…DINT), 301 to 330 (DSAS…DANK), 334 to 363 (DGML…RTRV), 366 to 395 (SGIS…DVNA), 408 to 437 (RRSS…DPNR), 438 to 467 (DVIN…NIDA), and 474 to 502 (TAFP…NGEP). Serine 369 carries the phosphoserine modification. An SOCS box domain is found at 579–633 (EDWAVIKEKAEPPRPLAHLCRLRVRKAIGKYRIKLLDTLPLPGRLIRYLKYENTQ).

It belongs to the ankyrin SOCS box (ASB) family. Component of a probable ECS E3 ubiquitin-protein ligase complex which contains CUL5, either RBX1 or RNF7/RBX2, Elongin BC complex (ELOB and ELOC) and ASB2. Interacts with SKP2. Through its interaction with SKP2, likely to bridge the formation of dimeric E3-ubiquitin-protein ligase complexes composed of an ECS complex and an SCF(SKP2) complex. Interacts with JAK2; the interaction targets JAK2 for Notch-mediated proteasomal degradation. Interacts with TCF3/E2A; the interaction is mediated by SKP2 and targets TCF3 for Notch-mediated proteasomal degradation. Interacts with DES. In terms of processing, monoubiquitinated.

The protein localises to the cytoplasm. It localises to the cytoskeleton. Its subcellular location is the stress fiber. The protein resides in the myofibril. It is found in the sarcomere. The protein localises to the z line. The protein operates within protein modification; protein ubiquitination. Functionally, substrate-recognition component of a SCF-like ECS (Elongin-Cullin-SOCS-box protein) E3 ubiquitin-protein ligase complex which mediates the ubiquitination and subsequent proteasomal degradation of target proteins. Mediates Notch-induced ubiquitination and degradation of substrates including E2A and JAK2. Required during embryonic heart development for complete heart looping. Required for cardiomyocyte differentiation. Involved in myogenic differentiation and targets filamin FLNB for proteasomal degradation but not filamin FLNA. Also targets DES for proteasomal degradation. Acts as a negative regulator of skeletal muscle mass. In Bos taurus (Bovine), this protein is Ankyrin repeat and SOCS box protein 2.